Reading from the N-terminus, the 149-residue chain is Putative pre-16S rRNA nuclease (149 aa).

This sequence belongs to the YqgF nuclease family.

It localises to the cytoplasm. Functionally, could be a nuclease involved in processing of the 5'-end of pre-16S rRNA. This Burkholderia ambifaria (strain MC40-6) protein is Putative pre-16S rRNA nuclease.